A 382-amino-acid polypeptide reads, in one-letter code: 3-dehydroquinate synthase (382 aa).

NAD(+)-binding positions include 81 to 86, 115 to 119, 139 to 140, lysine 152, and lysine 161; these read EGEISK, GVVGD, and TS. Zn(2+)-binding residues include glutamate 194, histidine 256, and histidine 274.

The protein belongs to the sugar phosphate cyclases superfamily. Dehydroquinate synthase family. Requires NAD(+) as cofactor. Co(2+) serves as cofactor. It depends on Zn(2+) as a cofactor.

It is found in the cytoplasm. The enzyme catalyses 7-phospho-2-dehydro-3-deoxy-D-arabino-heptonate = 3-dehydroquinate + phosphate. It functions in the pathway metabolic intermediate biosynthesis; chorismate biosynthesis; chorismate from D-erythrose 4-phosphate and phosphoenolpyruvate: step 2/7. Catalyzes the conversion of 3-deoxy-D-arabino-heptulosonate 7-phosphate (DAHP) to dehydroquinate (DHQ). In Bradyrhizobium diazoefficiens (strain JCM 10833 / BCRC 13528 / IAM 13628 / NBRC 14792 / USDA 110), this protein is 3-dehydroquinate synthase.